The sequence spans 199 residues: Charged multivesicular body protein 1b (199 aa).

A coiled-coil region spans residues 26–48 (DKEEKAEKAKIKKAIQKGNMEVA). Residues 132–156 (MEDTMSSTTTLTTPQNQVDMLLQEM) form an interaction with IST1 region. The segment at 167 to 199 (ELPQGQTGSVGTSVASAEQDELSQRLARLRDQV) is disordered. The span at 170-182 (QGQTGSVGTSVAS) shows a compositional bias: polar residues. Residues 174–199 (GSVGTSVASAEQDELSQRLARLRDQV) form an interaction with SPAST region. The stretch at 178-199 (TSVASAEQDELSQRLARLRDQV) forms a coiled coil. Positions 180–196 (VASAEQDELSQRLARLR) are interaction with VPS4A, MITD1 and STAMBP. The tract at residues 180–199 (VASAEQDELSQRLARLRDQV) is interaction with VTA1. Positions 183–199 (AEQDELSQRLARLRDQV) are interaction with VPS4B. An MIT-interacting motif motif is present at residues 186 to 196 (DELSQRLARLR).

It belongs to the SNF7 family. In terms of assembly, probable peripherally associated component of the endosomal sorting required for transport complex III (ESCRT-III). ESCRT-III components are thought to multimerize to form a flat lattice on the perimeter membrane of the endosome. Several assembly forms of ESCRT-III may exist that interact and act sequentially. Interacts with CHMP1A. Interacts with VTA1; the interaction probably involves the open conformation of CHMP1B. Interacts with CHMP2A. Interacts with VPS4A; the interaction is direct. Interacts with VPS4B; the interaction is direct. Interacts with SPAST (via MIT domain); the interaction is direct. Interacts with IST1. Interacts with MITD1. Interacts with STAMBP. As to expression, widely expressed. Expressed in pancreas, kidney, skeletal muscle, liver, lung, placenta and brain.

It is found in the cytoplasm. The protein localises to the cytosol. Its subcellular location is the endosome. The protein resides in the late endosome membrane. Probable peripherally associated component of the endosomal sorting required for transport complex III (ESCRT-III) which is involved in multivesicular bodies (MVBs) formation and sorting of endosomal cargo proteins into MVBs. MVBs contain intraluminal vesicles (ILVs) that are generated by invagination and scission from the limiting membrane of the endosome and mostly are delivered to lysosomes enabling degradation of membrane proteins, such as stimulated growth factor receptors, lysosomal enzymes and lipids. The MVB pathway appears to require the sequential function of ESCRT-O, -I,-II and -III complexes. ESCRT-III proteins mostly dissociate from the invaginating membrane before the ILV is released. The ESCRT machinery also functions in topologically equivalent membrane fission events, such as the terminal stages of cytokinesis and the budding of enveloped viruses (HIV-1 and other lentiviruses). ESCRT-III proteins are believed to mediate the necessary vesicle extrusion and/or membrane fission activities, possibly in conjunction with the AAA ATPase VPS4. Involved in cytokinesis. Involved in recruiting VPS4A and/or VPS4B and SPAST to the midbody of dividing cells. Involved in HIV-1 p6- and p9-dependent virus release. The chain is Charged multivesicular body protein 1b (CHMP1B) from Homo sapiens (Human).